The sequence spans 491 residues: UDP-N-acetylmuramate--L-alanine ligase (491 aa).

126–132 (GTHGKTT) provides a ligand contact to ATP.

It belongs to the MurCDEF family.

Its subcellular location is the cytoplasm. The enzyme catalyses UDP-N-acetyl-alpha-D-muramate + L-alanine + ATP = UDP-N-acetyl-alpha-D-muramoyl-L-alanine + ADP + phosphate + H(+). Its pathway is cell wall biogenesis; peptidoglycan biosynthesis. Functionally, cell wall formation. This Shigella boydii serotype 18 (strain CDC 3083-94 / BS512) protein is UDP-N-acetylmuramate--L-alanine ligase.